The chain runs to 684 residues: MKRVKSESFRGVYSSRRFKLSHFLLAIAGFYLVFLAFKFPHFIEMVAMLSGDTGLDGALSDTSLDVSLSGSLRNDMLNRKLEDEDHQSGPSTTQKVSPEEKINGSKQIQPLLFRYGRISGEVMRRRNRTIHMSPFERMADEAWILGSKAWEDVDKFEVDKINESASIFEGKVESCPSQISMNGDDLNKANRIMLLPCGLAAGSSITILGTPQYAHKESVPQRSRLTRSYGMVLVSQFMVELQGLKTGDGEYPPKILHLNPRIKGDWNHRPVIEHNTCYRMQWGVAQRCDGTPSKKDADVLVDGFRRCEKWTQNDIIDMVDSKESKTTSWFKRFIGREQKPEVTWSFPFAEGKVFVLTLRAGIDGFHINVGGRHVSSFPYRPGFTIEDATGLAVTGDVDIHSIHATSLSTSHPSFSPQKAIEFSSEWKAPPLPGTPFRLFMGVLSATNHFSERMAVRKTWMQHPSIKSSDVVARFFVALNPRKEVNAMLKKEAEYFGDIVILPFMDRYELVVLKTIAICEFGVQNVTAPYIMKCDDDTFIRVESILKQIDGVSPEKSLYMGNLNLRHRPLRTGKWTVTWEEWPEAVYPPYANGPGYIISSNIAKYIVSQNSRHKLRLFKMEDVSMGLWVEQFNASMQPVEYSHSWKFCQYGCTLNYYTAHYQSPSQMMCLWDNLLKGRPQCCNFR.

At 1-22 (MKRVKSESFRGVYSSRRFKLSH) the chain is on the cytoplasmic side. A helical; Signal-anchor for type II membrane protein membrane pass occupies residues 23–43 (FLLAIAGFYLVFLAFKFPHFI). At 44–684 (EMVAMLSGDT…KGRPQCCNFR (641 aa)) the chain is on the lumenal side. The tract at residues 80 to 102 (KLEDEDHQSGPSTTQKVSPEEKI) is disordered. N-linked (GlcNAc...) asparagine glycosylation is found at Asn103, Asn127, and Asn162. Residues 191 to 405 (RIMLLPCGLA…DVDIHSIHAT (215 aa)) enclose the Galectin domain. N-linked (GlcNAc...) asparagine glycans are attached at residues Asn524 and Asn632.

Belongs to the glycosyltransferase 31 family. Requires Mn(2+) as cofactor. In terms of tissue distribution, expressed in stems and at lower levels in cauline leaves and siliques.

The protein localises to the golgi apparatus membrane. Its pathway is protein modification; protein glycosylation. Its function is as follows. Possesses hydroxyproline O-galactosyltransferase activity. Transfers galactose from UDP-galactose to hydroxyproline residues in the arabinogalactan proteins (AGPs). Is specific for AGPs containing non-contiguous peptidyl hydroxyproline residues. Utilizes UDP-galactose solely as sugar donor. The addition of galactose onto the peptidyl hydroxyproline residues in AGP core proteins represents the first committed step in arabinogalactan polysaccharide addition. AGP glycans play essential roles in both vegetative and reproductive plant growth. In Arabidopsis thaliana (Mouse-ear cress), this protein is Hydroxyproline O-galactosyltransferase GALT2.